Here is a 289-residue protein sequence, read N- to C-terminus: Diaminopimelate epimerase (289 aa).

Substrate-binding residues include Asn11 and Asn78. Residue Cys87 is the Proton donor of the active site. Substrate is bound by residues 88-89 (GN), Asn163, Asn199, and 217-218 (ER). Cys226 serves as the catalytic Proton acceptor. 227–228 (GT) contributes to the substrate binding site.

It belongs to the diaminopimelate epimerase family. In terms of assembly, homodimer.

Its subcellular location is the cytoplasm. It catalyses the reaction (2S,6S)-2,6-diaminopimelate = meso-2,6-diaminopimelate. It participates in amino-acid biosynthesis; L-lysine biosynthesis via DAP pathway; DL-2,6-diaminopimelate from LL-2,6-diaminopimelate: step 1/1. Its function is as follows. Catalyzes the stereoinversion of LL-2,6-diaminopimelate (L,L-DAP) to meso-diaminopimelate (meso-DAP), a precursor of L-lysine and an essential component of the bacterial peptidoglycan. In Mycolicibacterium vanbaalenii (strain DSM 7251 / JCM 13017 / BCRC 16820 / KCTC 9966 / NRRL B-24157 / PYR-1) (Mycobacterium vanbaalenii), this protein is Diaminopimelate epimerase.